The sequence spans 610 residues: Elongation factor 4 (610 aa).

A tr-type G domain is found at 11-193; it reads EKIRNFSIIA…QIVEKVPAPS (183 aa). GTP-binding positions include 23–28 and 140–143; these read DHGKST and NKID.

It belongs to the TRAFAC class translation factor GTPase superfamily. Classic translation factor GTPase family. LepA subfamily.

Its subcellular location is the cell membrane. It carries out the reaction GTP + H2O = GDP + phosphate + H(+). Required for accurate and efficient protein synthesis under certain stress conditions. May act as a fidelity factor of the translation reaction, by catalyzing a one-codon backward translocation of tRNAs on improperly translocated ribosomes. Back-translocation proceeds from a post-translocation (POST) complex to a pre-translocation (PRE) complex, thus giving elongation factor G a second chance to translocate the tRNAs correctly. Binds to ribosomes in a GTP-dependent manner. The sequence is that of Elongation factor 4 from Streptococcus uberis (strain ATCC BAA-854 / 0140J).